We begin with the raw amino-acid sequence, 211 residues long: Putative hydrolase SMU_367 (211 aa).

The signal sequence occupies residues 1 to 29 (MKKQFLEKAVFTVAATAATVVLGNKMADA). The region spanning 30 to 74 (DTYTLQEGDSFFSVAQRYHMDAYELASMNGKDITSLILPGQTLTV) is the LysM domain. The disordered stretch occupies residues 77-101 (SAAPDNQAAAPTDTTQATTETNDAN). Residues 78 to 101 (AAPDNQAAAPTDTTQATTETNDAN) are compositionally biased toward low complexity. Residues 85–209 (AAPTDTTQAT…GTPGSVSYIY (125 aa)) form the Peptidase C51 domain.

In Streptococcus mutans serotype c (strain ATCC 700610 / UA159), this protein is Putative hydrolase SMU_367.